The primary structure comprises 213 residues: Uridine kinase (213 aa).

Position 14–21 (14–21 (GASASGKS)) interacts with ATP.

Belongs to the uridine kinase family.

Its subcellular location is the cytoplasm. It catalyses the reaction uridine + ATP = UMP + ADP + H(+). The enzyme catalyses cytidine + ATP = CMP + ADP + H(+). The protein operates within pyrimidine metabolism; CTP biosynthesis via salvage pathway; CTP from cytidine: step 1/3. It participates in pyrimidine metabolism; UMP biosynthesis via salvage pathway; UMP from uridine: step 1/1. The sequence is that of Uridine kinase from Vibrio atlanticus (strain LGP32) (Vibrio splendidus (strain Mel32)).